The chain runs to 237 residues: Ribonuclease PH (237 aa).

Phosphate is bound by residues Arg-86 and 124–126; that span reads GTR.

This sequence belongs to the RNase PH family. As to quaternary structure, homohexameric ring arranged as a trimer of dimers.

It catalyses the reaction tRNA(n+1) + phosphate = tRNA(n) + a ribonucleoside 5'-diphosphate. Functionally, phosphorolytic 3'-5' exoribonuclease that plays an important role in tRNA 3'-end maturation. Removes nucleotide residues following the 3'-CCA terminus of tRNAs; can also add nucleotides to the ends of RNA molecules by using nucleoside diphosphates as substrates, but this may not be physiologically important. Probably plays a role in initiation of 16S rRNA degradation (leading to ribosome degradation) during starvation. In Erythrobacter litoralis (strain HTCC2594), this protein is Ribonuclease PH.